The following is a 4244-amino-acid chain: Tenascin-X (4244 aa).

The first 23 residues, 1–23, serve as a signal peptide directing secretion; sequence MMPAQYALTSSLVLLVLLSTARA. A disordered region spans residues 27–57; that stretch reads SSRSNVTLPAPRPPPQPGGHTVGAGVGSPSS. N-linked (GlcNAc...) asparagine glycosylation occurs at Asn31. In terms of domain architecture, EGF-like 1; incomplete spans 156–168; the sequence is CSCEPGWGGPTCS. The tract at residues 169–189 is disordered; the sequence is DPTDAEIPPSSPPSASGSCPD. EGF-like domains follow at residues 183 to 213, 214 to 244, 245 to 275, 276 to 306, 307 to 337, 338 to 368, 369 to 399, 400 to 430, 431 to 461, 462 to 492, 493 to 523, 524 to 554, 555 to 585, 586 to 616, 617 to 647, 648 to 679, 684 to 714, and 715 to 746; these read ASGSCPDDCNDQGRCVRGRCVCFPGYTGPSC, GWPSCPGDCQGRGRCVQGVCVCRAGFSGPDC, SQRSCPRGCSQRGRCEGGRCVCDPGYTGDDC, GMRSCPRGCSQRGRCENGRCVCNPGYTGEDC, GVRSCPRGCSQRGRCKDGRCVCDPGYTGEDC, GTRSCPWDCGEGGRCVDGRCVCWPGYTGEDC, STRTCPRDCRGRGRCEDGECICDTGYSGDDC, GVRSCPGDCNQRGRCEDGRCVCWPGYTGTDC, GSRACPRDCRGRGRCENGVCVCNAGYSGEDC, GVRSCPGDCRGRGRCESGRCMCWPGYTGRDC, GTRACPGDCRGRGRCVDGRCVCNPGFTGEDC, GSRRCPGDCRGHGLCEDGVCVCDAGYSGEDC, STRSCPGGCRGRGQCLDGRCVCEDGYSGEDC, GVRQCPNDCSQHGVCQDGVCICWEGYVSEDC, SIRTCPSNCHGRGRCEEGRCLCDPGYTGPTC, ATRMCPADCRGRGRCVQGVCLCHVGYGGEDCG, PASACPGGCGPRELCRAGQCVCVEGFRGPDC, and AIQTCPGDCRGRGECHDGSCVCKDGYAGEDCG. 54 disulfide bridges follow: Cys187–Cys197, Cys191–Cys202, Cys204–Cys213, Cys218–Cys228, Cys222–Cys233, Cys235–Cys244, Cys249–Cys259, Cys253–Cys264, Cys266–Cys275, Cys280–Cys290, Cys284–Cys295, Cys297–Cys306, Cys311–Cys321, Cys315–Cys326, Cys328–Cys337, Cys342–Cys352, Cys346–Cys357, Cys359–Cys368, Cys373–Cys383, Cys377–Cys388, Cys390–Cys399, Cys404–Cys414, Cys408–Cys419, Cys421–Cys430, Cys435–Cys445, Cys439–Cys450, Cys452–Cys461, Cys466–Cys476, Cys470–Cys481, Cys483–Cys492, Cys497–Cys507, Cys501–Cys512, Cys514–Cys523, Cys528–Cys538, Cys532–Cys543, Cys545–Cys554, Cys559–Cys569, Cys563–Cys574, Cys576–Cys585, Cys590–Cys600, Cys594–Cys605, Cys607–Cys616, Cys621–Cys631, Cys625–Cys636, Cys638–Cys647, Cys652–Cys662, Cys656–Cys667, Cys669–Cys678, Cys688–Cys698, Cys692–Cys703, Cys705–Cys714, Cys719–Cys729, Cys723–Cys734, and Cys736–Cys745. The tract at residues 926–956 is disordered; sequence TGSSPLGLLGTTDEPPPSGPSTTQGAQAPLL. Fibronectin type-III domains are found at residues 959 to 1051, 1064 to 1153, 1161 to 1249, 1263 to 1352, 1374 to 1468, 1476 to 1572, 1574 to 1669, 1674 to 1764, 1778 to 1868, and 1883 to 1971; these read RPQE…IMDK, RLGE…PQSD, HLGN…APER, LLGE…PQED, LLGE…TPPA, RLGE…TEAS, PPLE…RGDA, PPRL…ARSA, LGEE…REET, and HLGE…VPEE. Residues 1340-1372 are disordered; it reads PESVVAKTAPQEDVDETPSPTELGTEAPESPEE. Residues 1666-1668 carry the Cell attachment site motif; sequence RGD. The segment at 1752–1777 is disordered; sequence PLTADGTTEARSAMDDTGTKRPPKPR. A disordered region spans residues 1968–1990; that stretch reads VPEEEKPSEPPTATPEPPIKPRL. Over residues 1976-1987 the composition is skewed to pro residues; that stretch reads EPPTATPEPPIK. Fibronectin type-III domains lie at 1989–2089, 2097–2185, 2196–2296, 2305–2398, and 2408–2502; these read RLGE…SMEA, LLGE…APEE, RLGQ…TEPP, RLEE…TPSP, and PPEE…PQED. The interval 2281–2304 is disordered; the sequence is APGKDEEMAPASTEPPTPEPPIKP. Residues 2495–2542 are disordered; sequence GVTAPQEDVDETPSPTEPGTEAPGPPEEPLLGELTVTGSSPDSLSLSW. Low complexity predominate over residues 2506-2516; that stretch reads TPSPTEPGTEA. Fibronectin type-III domains follow at residues 2519 to 2617, 2625 to 2723, 2733 to 2840, 2841 to 2939, 2949 to 3042, 3062 to 3153, 3168 to 3260, 3264 to 3355, 3357 to 3446, 3451 to 3544, 3553 to 3647, 3657 to 3754, 3758 to 3847, 3848 to 3934, and 3935 to 4025; these read PPEE…TTQA, PPIK…TPSP, PPEE…TTPE, PPNK…TPAP, PPEE…APKD, RLGE…TPSP, LLGE…TPLP, RLGE…TKPS, RLGE…PLEK, HLGE…TPAP, PPEE…LAPA, RLSQ…TLSP, SPRD…VPDG, PTQL…TGLE, and APRD…LRIP. Residues 2530-2542 show a composition bias toward polar residues; the sequence is VTGSSPDSLSLSW. Disordered regions lie at residues 2824 to 2847 and 2933 to 2969; these read PEDEAETTQAVPTTTPEPPNKPRL and EEETPAPTEPSTEAPEPPEEPLLGELTVTGSSPDSLS. Over residues 2937 to 2946 the composition is skewed to low complexity; the sequence is PAPTEPSTEA. The segment covering 2960–2969 has biased composition (polar residues); that stretch reads VTGSSPDSLS. 2 disordered regions span residues 3536–3559 and 3636–3662; these read APEEDTPAPELAPEAPEPPEEPRL and LSAEGTTGLAPAGQTSEESRPRLSQLS. Asn3855, Asn3908, and Asn3920 each carry an N-linked (GlcNAc...) asparagine glycan. The Fibrinogen C-terminal domain maps to 4021 to 4236; sequence GLRIPFPRDC…FTEMKLRPRN (216 aa). Cys4030 and Cys4060 are joined by a disulfide. The N-linked (GlcNAc...) asparagine glycan is linked to Asn4095. Cys4182 and Cys4195 form a disulfide bridge.

It belongs to the tenascin family. As to quaternary structure, homotrimer. Interacts with type I, III and V collagens and tropoelastin via its 29th fibronectin type-III domain. Highly expressed in fetal adrenal, in fetal testis, fetal smooth, striated and cardiac muscle. Isoform XB-short is only expressed in the adrenal gland.

It is found in the secreted. The protein resides in the extracellular space. The protein localises to the extracellular matrix. Appears to mediate interactions between cells and the extracellular matrix. Substrate-adhesion molecule that appears to inhibit cell migration. Accelerates collagen fibril formation. May play a role in supporting the growth of epithelial tumors. This Homo sapiens (Human) protein is Tenascin-X.